The following is a 407-amino-acid chain: Transmembrane protein 184B (407 aa).

Residues 1 to 25 (MTVRGDVLAPDPASPTTAAASPSVS) are disordered. Residues 9-25 (APDPASPTTAAASPSVS) show a composition bias toward low complexity. A run of 7 helical transmembrane segments spans residues 40–60 (FLMT…ALLI), 84–104 (ILFI…FFTN), 121–141 (LVIY…SSIM), 178–198 (LQFC…QAFG), 214–234 (VTII…LFYF), 249–269 (FFMV…LAIL), and 290–310 (VAAG…ALAL). A disordered region spans residues 369 to 395 (TLEPGPTWRGGAHGLSRSHSLSGARDN). 3 positions are modified to phosphoserine: Ser388, Ser402, and Ser403.

This sequence belongs to the TMEM184 family.

Its subcellular location is the membrane. Functionally, may activate the MAP kinase signaling pathway. The protein is Transmembrane protein 184B (TMEM184B) of Homo sapiens (Human).